The chain runs to 285 residues: Nucleotide-binding protein Pnap_0906 (285 aa).

8 to 15 is an ATP binding site; it reads GMSGSGKS. GTP is bound at residue 57–60; sequence DVRS.

The protein belongs to the RapZ-like family.

Its function is as follows. Displays ATPase and GTPase activities. This Polaromonas naphthalenivorans (strain CJ2) protein is Nucleotide-binding protein Pnap_0906.